The chain runs to 199 residues: Peroxiredoxin-1 (199 aa).

Ser2 carries the N-acetylserine modification. In terms of domain architecture, Thioredoxin spans 6–165 (AKIGHPAPNF…TLRLVQAFQF (160 aa)). Lys7 carries the post-translational modification N6-acetyllysine; alternate. Lys7 participates in a covalent cross-link: Glycyl lysine isopeptide (Lys-Gly) (interchain with G-Cter in SUMO2); alternate. N6-acetyllysine occurs at positions 16 and 27. Position 32 is a phosphoserine (Ser32). Lys35 is modified (N6-acetyllysine; alternate). The residue at position 35 (Lys35) is an N6-succinyllysine; alternate. Cys52 acts as the Cysteine sulfenic acid (-SOH) intermediate in catalysis. Thr90 is subject to Phosphothreonine; by CDK1. Lys120 participates in a covalent cross-link: Glycyl lysine isopeptide (Lys-Gly) (interchain with G-Cter in SUMO2). The residue at position 136 (Lys136) is an N6-acetyllysine. Residues 176–199 (GWKPGSDTIKPDVQKSKEYFSKQK) form a disordered region. Positions 184–199 (IKPDVQKSKEYFSKQK) are enriched in basic and acidic residues. A Glycyl lysine isopeptide (Lys-Gly) (interchain with G-Cter in SUMO1) cross-link involves residue Lys185. Position 197 is an N6-acetyllysine (Lys197).

The protein belongs to the peroxiredoxin family. AhpC/Prx1 subfamily. Homodimer; disulfide-linked, upon oxidation. 5 homodimers assemble to form a ring-like decamer. Interacts with GDPD5; forms a mixed-disulfide with GDPD5. Interacts with SESN1 and SESN2. Interacts with FAM107A. In terms of processing, phosphorylated on Thr-90 during the M-phase, which leads to a more than 80% decrease in enzymatic activity. Post-translationally, acetylation increases reducing activity and resistance to superoxidation. Deacetylated by HDAC6 which decreases reducing activity. The enzyme can be inactivated by further oxidation of the cysteine sulfenic acid (C(P)-SOH) to sulphinic acid (C(P)-SO2H) instead of its condensation to a disulfide bond. It can be reactivated by forming a transient disulfide bond with sulfiredoxin SRXN1, which reduces the cysteine sulfinic acid in an ATP- and Mg-dependent manner.

The protein localises to the cytoplasm. It localises to the melanosome. The enzyme catalyses a hydroperoxide + [thioredoxin]-dithiol = an alcohol + [thioredoxin]-disulfide + H2O. Thiol-specific peroxidase that catalyzes the reduction of hydrogen peroxide and organic hydroperoxides to water and alcohols, respectively. Plays a role in cell protection against oxidative stress by detoxifying peroxides and as sensor of hydrogen peroxide-mediated signaling events. Might participate in the signaling cascades of growth factors and tumor necrosis factor-alpha by regulating the intracellular concentrations of H(2)O(2). Reduces an intramolecular disulfide bond in GDPD5 that gates the ability to GDPD5 to drive postmitotic motor neuron differentiation. This is Peroxiredoxin-1 (PRDX1) from Homo sapiens (Human).